A 163-amino-acid polypeptide reads, in one-letter code: Campylobacter invasion antigen D (163 aa).

An MKD motif is present at residues 135 to 145; it reads KKDDLENRLNL.

In terms of assembly, interacts with the host cell protein IQGAP1, thus displacing RACGAP1 from the IQGAP1 complex.

The protein localises to the secreted. The protein resides in the host cytoplasm. Its subcellular location is the host cytosol. Effector protein required for the development of acute disease and colon inflammatory lesions. Required for maximal host cell invasion and maximal secretion of the inflammatory chemokine interleukin-8 (IL-8) from host cells. Acts by activating the host MAP kinase signaling pathways ERK-1/2 and p38 to promote both cellular invasion and the release of IL-8. CiaD mediated activation of ERK-1/2 leads to the phosphorylation of host cortactin (CTTN) on serine residues and association of cortactin with N-WASP, promoting actin cytoskeleton rearrangement, membrane ruffling and host cell invasion. In addition, maximal host cell invasion requires interaction with the host cell protein IQGAP1, a Ras GTPase-activating-like protein. Binding to IQGAP1 facilitates the activation of the Rho GTPases RAC1 and CDC42, further promoting actin reorganization and bacterial uptake. CiaD promotes RAC1 activation by excluding RACGAP1 from the IQGAP1 complex, preventing the deactivation of RAC1. CiaD probably activates ERK signaling upstream or independently of IQGAP1. This chain is Campylobacter invasion antigen D, found in Campylobacter jejuni subsp. jejuni serotype O:2 (strain ATCC 700819 / NCTC 11168).